The chain runs to 129 residues: Fluoride-specific ion channel FluC 2 (129 aa).

4 helical membrane passes run Leu-4 to Gly-24, Thr-39 to Val-59, Tyr-65 to Ser-85, and Gly-100 to Leu-120. Residues Gly-79 and Thr-82 each coordinate Na(+).

The protein belongs to the fluoride channel Fluc/FEX (TC 1.A.43) family.

The protein localises to the cell inner membrane. It carries out the reaction fluoride(in) = fluoride(out). With respect to regulation, na(+) is not transported, but it plays an essential structural role and its presence is essential for fluoride channel function. Functionally, fluoride-specific ion channel. Important for reducing fluoride concentration in the cell, thus reducing its toxicity. The chain is Fluoride-specific ion channel FluC 2 from Brucella suis biovar 1 (strain 1330).